The chain runs to 448 residues: Probable rhamnogalacturonase E (448 aa).

The first 22 residues, 1–22 (MTWSTSFLVATSLLSIINSVHA), serve as a signal peptide directing secretion. The cysteines at positions 43 and 69 are disulfide-linked. Asparagine 54, asparagine 92, and asparagine 131 each carry an N-linked (GlcNAc...) asparagine glycan. Catalysis depends on aspartate 221, which acts as the Proton donor. Cysteine 223 and cysteine 240 form a disulfide bridge. N-linked (GlcNAc...) asparagine glycans are attached at residues asparagine 256 and asparagine 284. Histidine 296 is an active-site residue. N-linked (GlcNAc...) asparagine glycans are attached at residues asparagine 323 and asparagine 328. Cystine bridges form between cysteine 346-cysteine 352 and cysteine 374-cysteine 382.

It belongs to the glycosyl hydrolase 28 family.

The protein resides in the secreted. Functionally, pectinolytic enzymes consist of four classes of enzymes: pectine lyase, polygalacturonase, pectin methylesterase and rhamnogalacturonase. Hydrolyzes alpha-D-galacturonopyranosyl-(1,2)-alpha-L-rhamnopyranosyl linkages in the backbone of the hairy regions of pectins. The protein is Probable rhamnogalacturonase E (rhgE) of Aspergillus niger (strain ATCC MYA-4892 / CBS 513.88 / FGSC A1513).